The following is a 266-amino-acid chain: Imidazole glycerol phosphate synthase subunit HisF (266 aa).

Residues aspartate 11 and aspartate 130 contribute to the active site.

The protein belongs to the HisA/HisF family. As to quaternary structure, heterodimer of HisH and HisF.

It is found in the cytoplasm. It carries out the reaction 5-[(5-phospho-1-deoxy-D-ribulos-1-ylimino)methylamino]-1-(5-phospho-beta-D-ribosyl)imidazole-4-carboxamide + L-glutamine = D-erythro-1-(imidazol-4-yl)glycerol 3-phosphate + 5-amino-1-(5-phospho-beta-D-ribosyl)imidazole-4-carboxamide + L-glutamate + H(+). It participates in amino-acid biosynthesis; L-histidine biosynthesis; L-histidine from 5-phospho-alpha-D-ribose 1-diphosphate: step 5/9. In terms of biological role, IGPS catalyzes the conversion of PRFAR and glutamine to IGP, AICAR and glutamate. The HisF subunit catalyzes the cyclization activity that produces IGP and AICAR from PRFAR using the ammonia provided by the HisH subunit. In Verminephrobacter eiseniae (strain EF01-2), this protein is Imidazole glycerol phosphate synthase subunit HisF.